We begin with the raw amino-acid sequence, 125 residues long: Small ribosomal subunit protein uS13 (125 aa).

Residues 92–125 (RRSLPVRGQRTRTNARTRKGKRKTVAGKKKAVKK) are disordered.

It belongs to the universal ribosomal protein uS13 family. As to quaternary structure, part of the 30S ribosomal subunit. Forms a loose heterodimer with protein S19. Forms two bridges to the 50S subunit in the 70S ribosome.

Its function is as follows. Located at the top of the head of the 30S subunit, it contacts several helices of the 16S rRNA. In the 70S ribosome it contacts the 23S rRNA (bridge B1a) and protein L5 of the 50S subunit (bridge B1b), connecting the 2 subunits; these bridges are implicated in subunit movement. Contacts the tRNAs in the A and P-sites. The sequence is that of Small ribosomal subunit protein uS13 from Pelodictyon phaeoclathratiforme (strain DSM 5477 / BU-1).